Consider the following 223-residue polypeptide: Small ribosomal subunit protein uS3 (223 aa).

A KH type-2 domain is found at 38–106 (LKAELKEKLK…EVYIDIQEVH (69 aa)).

It belongs to the universal ribosomal protein uS3 family. As to quaternary structure, part of the 30S ribosomal subunit. Forms a tight complex with proteins S10 and S14.

Functionally, binds the lower part of the 30S subunit head. Binds mRNA in the 70S ribosome, positioning it for translation. The sequence is that of Small ribosomal subunit protein uS3 from Koribacter versatilis (strain Ellin345).